Reading from the N-terminus, the 157-residue chain is Ribonuclease (157 aa).

The signal sequence occupies residues 1-34 (MMKMEGIALKKRLSWISVCLLVLVSAAGMLFSTA). The propeptide occupies 35–47 (AKTETSSHKAHTE). Glutamate 120 acts as the Proton acceptor in catalysis. Histidine 149 functions as the Proton donor in the catalytic mechanism.

It belongs to the ribonuclease N1/T1 family.

The protein resides in the secreted. Functionally, hydrolyzes phosphodiester bonds in RNA, poly- and oligoribonucleotides resulting in 3'-nucleoside monophosphates via 2',3'-cyclophosphate intermediates. This is Ribonuclease from Bacillus amyloliquefaciens (Bacillus velezensis).